A 453-amino-acid polypeptide reads, in one-letter code: Glutamyl-tRNA reductase (453 aa).

Substrate-binding positions include 50–53 (TCNR), S110, 115–117 (EPQ), and Q121. The active-site Nucleophile is the C51. 190–195 (GAGEMA) is a binding site for NADP(+). Positions 423–436 (REKVPTDAHADRKP) are enriched in basic and acidic residues. Residues 423-453 (REKVPTDAHADRKPPNFAETSDDFDVTDASE) form a disordered region. Over residues 442-453 (TSDDFDVTDASE) the composition is skewed to acidic residues.

It belongs to the glutamyl-tRNA reductase family. In terms of assembly, homodimer.

It carries out the reaction (S)-4-amino-5-oxopentanoate + tRNA(Glu) + NADP(+) = L-glutamyl-tRNA(Glu) + NADPH + H(+). It functions in the pathway porphyrin-containing compound metabolism; protoporphyrin-IX biosynthesis; 5-aminolevulinate from L-glutamyl-tRNA(Glu): step 1/2. Catalyzes the NADPH-dependent reduction of glutamyl-tRNA(Glu) to glutamate 1-semialdehyde (GSA). The chain is Glutamyl-tRNA reductase from Solidesulfovibrio magneticus (strain ATCC 700980 / DSM 13731 / RS-1) (Desulfovibrio magneticus).